A 214-amino-acid polypeptide reads, in one-letter code: Probable nicotinate-nucleotide adenylyltransferase (214 aa).

Belongs to the NadD family.

The catalysed reaction is nicotinate beta-D-ribonucleotide + ATP + H(+) = deamido-NAD(+) + diphosphate. It participates in cofactor biosynthesis; NAD(+) biosynthesis; deamido-NAD(+) from nicotinate D-ribonucleotide: step 1/1. Catalyzes the reversible adenylation of nicotinate mononucleotide (NaMN) to nicotinic acid adenine dinucleotide (NaAD). This chain is Probable nicotinate-nucleotide adenylyltransferase, found in Pseudomonas aeruginosa (strain UCBPP-PA14).